We begin with the raw amino-acid sequence, 292 residues long: Ribosomal protein L11 methyltransferase (292 aa).

S-adenosyl-L-methionine-binding residues include T143, G164, D186, and N228.

It belongs to the methyltransferase superfamily. PrmA family.

Its subcellular location is the cytoplasm. It catalyses the reaction L-lysyl-[protein] + 3 S-adenosyl-L-methionine = N(6),N(6),N(6)-trimethyl-L-lysyl-[protein] + 3 S-adenosyl-L-homocysteine + 3 H(+). Its function is as follows. Methylates ribosomal protein L11. This is Ribosomal protein L11 methyltransferase from Aeromonas salmonicida (strain A449).